The chain runs to 182 residues: MAANRGSRTFLSVFLLCCWQGAELQPIKTTSGPITEGSLNSTTENIPEALDEILAQEILEPKTSAVSETSPRPRSSILTTVQTKEINAGIDENYQEEAFENYHEVLENIEHLPTKEESGKNDRSTVANLHDHSSQTKHEPPSSPEGKGSSNDDVYGKLSVLDKILENIGQSEGSLELTESIF.

Residues 1–24 (MAANRGSRTFLSVFLLCCWQGAEL) form the signal peptide. Asn-40 carries N-linked (GlcNAc...) asparagine glycosylation. Residues 112–140 (LPTKEESGKNDRSTVANLHDHSSQTKHEP) are compositionally biased toward basic and acidic residues. The segment at 112-154 (LPTKEESGKNDRSTVANLHDHSSQTKHEPPSSPEGKGSSNDDV) is disordered.

In terms of tissue distribution, testis-specific. Expressed in zygotene and pachytene spermatocytes, round spermatids, elongating spermatids and spermatozoa (at protein level). Testis-specific.

It is found in the secreted. The protein resides in the cytoplasmic vesicle. It localises to the secretory vesicle. Its subcellular location is the acrosome lumen. Involved in fertilization. Seems not to play a direct role in sperm-egg binding or gamete fusion. The protein is Sperm acrosome-associated protein 7 of Mus musculus (Mouse).